Consider the following 469-residue polypeptide: Calcium-binding mitochondrial carrier protein SCaMC-2-A (469 aa).

The Mitochondrial intermembrane portion of the chain corresponds to 1 to 189; sequence MLCLCLYVPV…EHLTGMWWRH (189 aa). 3 EF-hand domains span residues 47–80, 78–113, and 114–149; these read TYRR…QDHE, DHEK…LGVH, and ISLK…QPAE. Positions 64, 66, and 71 each coordinate Ca(2+). Solcar repeat units lie at residues 184–270, 278–363, and 375–463; these read GMWW…IKRV, LGIS…LKNT, and PGVF…IKST. A helical membrane pass occupies residues 190-207; it reads LVSGGGAGAVSRTCTAPL. Over 208–244 the chain is Mitochondrial matrix; sequence DRLKVLMQVHGCQGKSMCLMSGLTQMIKEGGVRSLWR. A helical membrane pass occupies residues 245–264; it reads GNGINVIKIAPETALKFMAY. Residues 265–287 are Mitochondrial intermembrane-facing; the sequence is EQIKRVMGSSQETLGISERFVAG. The helical transmembrane segment at 288–301 threads the bilayer; sequence SLAGVIAQSTIYPM. The Mitochondrial matrix portion of the chain corresponds to 302–337; sequence EVLKTRLALRKTGQYKGISDCAKHILKTEGMSAFYK. Residues 338–357 form a helical membrane-spanning segment; the sequence is GYVPNMLGIIPYAGIDLAVY. Topologically, residues 358–380 are mitochondrial intermembrane; it reads ETLKNTWLQRYGTENADPGVFVL. Residues 381–398 form a helical membrane-spanning segment; that stretch reads LACGTVSSTCGQLASYPL. Topologically, residues 399–437 are mitochondrial matrix; the sequence is ALIRTRMQAQASVEGSSQVSMTGLFKQIMKTEGPTGLYR. The chain crosses the membrane as a helical span at residues 438 to 457; it reads GLTPNFLKVIPAVSISYVVY. The Mitochondrial intermembrane segment spans residues 458–469; sequence EHIKSTLGVRSR.

It belongs to the mitochondrial carrier (TC 2.A.29) family.

Its subcellular location is the mitochondrion inner membrane. Its function is as follows. Calcium-dependent mitochondrial solute carrier. This Danio rerio (Zebrafish) protein is Calcium-binding mitochondrial carrier protein SCaMC-2-A (slc25a25a).